An 816-amino-acid polypeptide reads, in one-letter code: Acyl-homoserine lactone acylase QuiP (816 aa).

The signal sequence occupies residues 1–33 (MASPALSHFLPRFGVAAAVAGVLSLTGCQTWNA). The active-site Nucleophile is the serine 262.

It belongs to the peptidase S45 family. Heterodimer of an alpha subunit and a beta subunit processed from the same precursor.

It is found in the periplasm. It catalyses the reaction an N-acyl-L-homoserine lactone + H2O = L-homoserine lactone + a carboxylate. Catalyzes the deacylation of acyl-homoserine lactone (AHL or acyl-HSL), releasing homoserine lactone (HSL) and the corresponding fatty acid. Possesses a specificity for the degradation of long-chain acyl-HSLs (side chains of seven or more carbons in length). The chain is Acyl-homoserine lactone acylase QuiP (quiP) from Pseudomonas fluorescens (strain Pf0-1).